The following is a 195-amino-acid chain: Imidazoleglycerol-phosphate dehydratase (195 aa).

Belongs to the imidazoleglycerol-phosphate dehydratase family.

It is found in the cytoplasm. The enzyme catalyses D-erythro-1-(imidazol-4-yl)glycerol 3-phosphate = 3-(imidazol-4-yl)-2-oxopropyl phosphate + H2O. The protein operates within amino-acid biosynthesis; L-histidine biosynthesis; L-histidine from 5-phospho-alpha-D-ribose 1-diphosphate: step 6/9. In Haloarcula marismortui (strain ATCC 43049 / DSM 3752 / JCM 8966 / VKM B-1809) (Halobacterium marismortui), this protein is Imidazoleglycerol-phosphate dehydratase.